The primary structure comprises 813 residues: Ankyrin repeat domain-containing protein SOWAHB (813 aa).

2 disordered regions span residues 142–256 (SAAP…QSLS) and 400–436 (ETCG…DSHK). Residues 158–176 (MSEKARVNPSHWDTKRYYP) show a composition bias toward basic and acidic residues. Positions 177 to 189 (EDPPVPDSLPVSP) are enriched in pro residues. Positions 191–202 (CTNTRQSSFTST) are enriched in polar residues. The segment covering 208 to 244 (HSLSSNNLSSSFSSPESPGLVAKPYNASPSPAGSSPN) has biased composition (low complexity). Over residues 245–256 (IREQTPKSQSLS) the composition is skewed to polar residues. Positions 400-416 (ETCGSEESDSGEGGDCD) are enriched in acidic residues. 2 ANK repeats span residues 657–686 (TGYT…KAGI) and 696–726 (NGYT…NVKV).

It belongs to the SOWAH family.

This chain is Ankyrin repeat domain-containing protein SOWAHB (sowahb), found in Xenopus laevis (African clawed frog).